The primary structure comprises 295 residues: 4-hydroxy-tetrahydrodipicolinate synthase (295 aa).

Thr48 contributes to the pyruvate binding site. The active-site Proton donor/acceptor is Tyr136. The active-site Schiff-base intermediate with substrate is Lys164. Ile206 serves as a coordination point for pyruvate.

The protein belongs to the DapA family. In terms of assembly, homotetramer; dimer of dimers.

The protein resides in the cytoplasm. The catalysed reaction is L-aspartate 4-semialdehyde + pyruvate = (2S,4S)-4-hydroxy-2,3,4,5-tetrahydrodipicolinate + H2O + H(+). Its pathway is amino-acid biosynthesis; L-lysine biosynthesis via DAP pathway; (S)-tetrahydrodipicolinate from L-aspartate: step 3/4. Its function is as follows. Catalyzes the condensation of (S)-aspartate-beta-semialdehyde [(S)-ASA] and pyruvate to 4-hydroxy-tetrahydrodipicolinate (HTPA). This Actinobacillus pleuropneumoniae serotype 7 (strain AP76) protein is 4-hydroxy-tetrahydrodipicolinate synthase.